The sequence spans 92 residues: Small ribosomal subunit protein uS19 (92 aa).

The protein belongs to the universal ribosomal protein uS19 family.

Functionally, protein S19 forms a complex with S13 that binds strongly to the 16S ribosomal RNA. The chain is Small ribosomal subunit protein uS19 from Streptococcus pyogenes serotype M49 (strain NZ131).